The primary structure comprises 305 residues: Ribonucleoside-diphosphate reductase small subunit (305 aa).

Glu64, Glu94, and His97 together coordinate Fe cation. Tyr101 is an active-site residue. Residues 150–170 (VLVFLLIEGIFFISSFYSIAT) form a helical membrane-spanning segment. Glu157, Glu191, and His194 together coordinate Fe cation.

The protein belongs to the ribonucleoside diphosphate reductase small chain family. As to quaternary structure, heterotetramer composed of a homodimer of the large subunit (R1) and a homodimer of the small subunit (R2). Larger multisubunit protein complex are also active, composed of (R1)n(R2)n. Fe cation serves as cofactor.

The protein localises to the host membrane. It carries out the reaction a 2'-deoxyribonucleoside 5'-diphosphate + [thioredoxin]-disulfide + H2O = a ribonucleoside 5'-diphosphate + [thioredoxin]-dithiol. In terms of biological role, ribonucleoside-diphosphate reductase holoenzyme provides the precursors necessary for viral DNA synthesis. Allows virus growth in non-dividing cells, as well as reactivation from latency in infected hosts. Catalyzes the biosynthesis of deoxyribonucleotides from the corresponding ribonucleotides. The chain is Ribonucleoside-diphosphate reductase small subunit from Equus caballus (Horse).